The primary structure comprises 407 residues: Methylthioribose-1-phosphate isomerase (407 aa).

Asp275 acts as the Proton donor in catalysis.

Belongs to the eIF-2B alpha/beta/delta subunits family. MtnA subfamily.

The protein localises to the cytoplasm. It is found in the nucleus. It carries out the reaction 5-(methylsulfanyl)-alpha-D-ribose 1-phosphate = 5-(methylsulfanyl)-D-ribulose 1-phosphate. Its pathway is amino-acid biosynthesis; L-methionine biosynthesis via salvage pathway; L-methionine from S-methyl-5-thio-alpha-D-ribose 1-phosphate: step 1/6. Its function is as follows. Catalyzes the interconversion of methylthioribose-1-phosphate (MTR-1-P) into methylthioribulose-1-phosphate (MTRu-1-P). The polypeptide is Methylthioribose-1-phosphate isomerase (Kluyveromyces lactis (strain ATCC 8585 / CBS 2359 / DSM 70799 / NBRC 1267 / NRRL Y-1140 / WM37) (Yeast)).